The sequence spans 296 residues: Glycine--tRNA ligase alpha subunit (296 aa).

The protein belongs to the class-II aminoacyl-tRNA synthetase family. Tetramer of two alpha and two beta subunits.

The protein resides in the cytoplasm. It carries out the reaction tRNA(Gly) + glycine + ATP = glycyl-tRNA(Gly) + AMP + diphosphate. This is Glycine--tRNA ligase alpha subunit from Exiguobacterium sibiricum (strain DSM 17290 / CCUG 55495 / CIP 109462 / JCM 13490 / 255-15).